Consider the following 372-residue polypeptide: UDP-N-acetylglucosamine--N-acetylmuramyl-(pentapeptide) pyrophosphoryl-undecaprenol N-acetylglucosamine transferase (372 aa).

UDP-N-acetyl-alpha-D-glucosamine is bound by residues 10-12 (TGG), N124, R166, S196, I256, and Q301.

It belongs to the glycosyltransferase 28 family. MurG subfamily.

The protein localises to the cell membrane. It carries out the reaction di-trans,octa-cis-undecaprenyl diphospho-N-acetyl-alpha-D-muramoyl-L-alanyl-D-glutamyl-meso-2,6-diaminopimeloyl-D-alanyl-D-alanine + UDP-N-acetyl-alpha-D-glucosamine = di-trans,octa-cis-undecaprenyl diphospho-[N-acetyl-alpha-D-glucosaminyl-(1-&gt;4)]-N-acetyl-alpha-D-muramoyl-L-alanyl-D-glutamyl-meso-2,6-diaminopimeloyl-D-alanyl-D-alanine + UDP + H(+). It participates in cell wall biogenesis; peptidoglycan biosynthesis. Its function is as follows. Cell wall formation. Catalyzes the transfer of a GlcNAc subunit on undecaprenyl-pyrophosphoryl-MurNAc-pentapeptide (lipid intermediate I) to form undecaprenyl-pyrophosphoryl-MurNAc-(pentapeptide)GlcNAc (lipid intermediate II). This is UDP-N-acetylglucosamine--N-acetylmuramyl-(pentapeptide) pyrophosphoryl-undecaprenol N-acetylglucosamine transferase from Desulforamulus reducens (strain ATCC BAA-1160 / DSM 100696 / MI-1) (Desulfotomaculum reducens).